A 279-amino-acid chain; its full sequence is uncharacterized protein (279 aa).

Residues 136–279 (TSNATEASEK…FTSDSSDEED (144 aa)) form a disordered region. A compositionally biased stretch (low complexity) spans 228–238 (NNGNGAVYSDS).

This is an uncharacterized protein from Invertebrate iridescent virus 3 (IIV-3).